The chain runs to 54 residues: Ovomucoid (54 aa).

A Kazal-like domain is found at 4–54 (VDCSDYPKPVCSPENMPVCGSDSKTYSNKCDFCNAVADSNGTLTLSHFGKC). Cystine bridges form between Cys6/Cys36, Cys14/Cys33, and Cys22/Cys54. The N-linked (GlcNAc...) asparagine glycan is linked to Asn43.

Its subcellular location is the secreted. This Nycticorax nycticorax (Black-crowned night-heron) protein is Ovomucoid.